We begin with the raw amino-acid sequence, 346 residues long: Probable dual-specificity RNA methyltransferase RlmN (346 aa).

The active-site Proton acceptor is the glutamate 90. The Radical SAM core domain occupies 96 to 330 (TRDRLTVCVS…VSVRASRGLD (235 aa)). Cysteine 103 and cysteine 335 form a disulfide bridge. Positions 110, 114, and 117 each coordinate [4Fe-4S] cluster. S-adenosyl-L-methionine is bound by residues 157 to 158 (GE), serine 187, 216 to 218 (SLH), and asparagine 292. Cysteine 335 acts as the S-methylcysteine intermediate in catalysis.

The protein belongs to the radical SAM superfamily. RlmN family. It depends on [4Fe-4S] cluster as a cofactor.

The protein resides in the cytoplasm. The catalysed reaction is adenosine(2503) in 23S rRNA + 2 reduced [2Fe-2S]-[ferredoxin] + 2 S-adenosyl-L-methionine = 2-methyladenosine(2503) in 23S rRNA + 5'-deoxyadenosine + L-methionine + 2 oxidized [2Fe-2S]-[ferredoxin] + S-adenosyl-L-homocysteine. It catalyses the reaction adenosine(37) in tRNA + 2 reduced [2Fe-2S]-[ferredoxin] + 2 S-adenosyl-L-methionine = 2-methyladenosine(37) in tRNA + 5'-deoxyadenosine + L-methionine + 2 oxidized [2Fe-2S]-[ferredoxin] + S-adenosyl-L-homocysteine. Specifically methylates position 2 of adenine 2503 in 23S rRNA and position 2 of adenine 37 in tRNAs. This is Probable dual-specificity RNA methyltransferase RlmN from Synechococcus sp. (strain RCC307).